Here is a 121-residue protein sequence, read N- to C-terminus: Large ribosomal subunit protein bL12 (121 aa).

Belongs to the bacterial ribosomal protein bL12 family. In terms of assembly, homodimer. Part of the ribosomal stalk of the 50S ribosomal subunit. Forms a multimeric L10(L12)X complex, where L10 forms an elongated spine to which 2 to 4 L12 dimers bind in a sequential fashion. Binds GTP-bound translation factors.

In terms of biological role, forms part of the ribosomal stalk which helps the ribosome interact with GTP-bound translation factors. Is thus essential for accurate translation. The polypeptide is Large ribosomal subunit protein bL12 (Shewanella frigidimarina (strain NCIMB 400)).